The sequence spans 638 residues: Threonine--tRNA ligase (638 aa).

The 61-residue stretch at 1–61 (MPDIKLPDGS…EQNADLAIIT (61 aa)) folds into the TGS domain. A catalytic region spans residues 242–533 (DHRRLGKQYD…LIENFAGALP (292 aa)). Cys-333, His-384, and His-510 together coordinate Zn(2+).

Belongs to the class-II aminoacyl-tRNA synthetase family. As to quaternary structure, homodimer. Zn(2+) is required as a cofactor.

Its subcellular location is the cytoplasm. The enzyme catalyses tRNA(Thr) + L-threonine + ATP = L-threonyl-tRNA(Thr) + AMP + diphosphate + H(+). Its function is as follows. Catalyzes the attachment of threonine to tRNA(Thr) in a two-step reaction: L-threonine is first activated by ATP to form Thr-AMP and then transferred to the acceptor end of tRNA(Thr). Also edits incorrectly charged L-seryl-tRNA(Thr). In Dechloromonas aromatica (strain RCB), this protein is Threonine--tRNA ligase.